We begin with the raw amino-acid sequence, 331 residues long: Ferredoxin--NADP reductase (331 aa).

Positions 34, 42, 47, 87, 120, 285, and 325 each coordinate FAD.

It belongs to the ferredoxin--NADP reductase type 2 family. In terms of assembly, homodimer. FAD is required as a cofactor.

It catalyses the reaction 2 reduced [2Fe-2S]-[ferredoxin] + NADP(+) + H(+) = 2 oxidized [2Fe-2S]-[ferredoxin] + NADPH. This chain is Ferredoxin--NADP reductase, found in Levilactobacillus brevis (strain ATCC 367 / BCRC 12310 / CIP 105137 / JCM 1170 / LMG 11437 / NCIMB 947 / NCTC 947) (Lactobacillus brevis).